We begin with the raw amino-acid sequence, 608 residues long: ATP-citrate synthase beta chain protein 1 (608 aa).

Residues 214–234 and 265–291 each bind ATP; these read ILRF…ELGG and FKSE…KNQA. Glutamate 231 contacts Mg(2+). Histidine 273 acts as the Tele-phosphohistidine intermediate in catalysis. 292 to 302 contacts CoA; it reads LKDAGAVVPTS.

This sequence belongs to the succinate/malate CoA ligase alpha subunit family. In terms of assembly, heterooctamer of 4 alpha and 4 beta chains.

The protein localises to the cytoplasm. It is found in the cytosol. The enzyme catalyses oxaloacetate + acetyl-CoA + ADP + phosphate = citrate + ATP + CoA. Its function is as follows. ATP citrate-lyase is the primary enzyme responsible for the synthesis of cytosolic acetyl-CoA, used for the elongation of fatty acids and biosynthesis of isoprenoids, flavonoids and malonated derivatives. May supply substrate to the cytosolic acetyl-CoA carboxylase, which generates the malonyl-CoA used for the synthesis of a multitude of compounds, including very long chain fatty acids and flavonoids. In contrast to all known animal ACL enzymes having a homomeric structure, plant ACLs are composed of alpha and beta chains. The protein is ATP-citrate synthase beta chain protein 1 (ACLB-1) of Oryza sativa subsp. japonica (Rice).